Reading from the N-terminus, the 83-residue chain is Putative beta-neurotoxin RjAa12f (83 aa).

The first 18 residues, 1 to 18 (MKILIFIIASFMLIGVEC), serve as a signal peptide directing secretion. Positions 19 to 82 (KEGYPMGRDG…VWDSSTNKCG (64 aa)) constitute an LCN-type CS-alpha/beta domain. Intrachain disulfides connect Cys-29–Cys-81, Cys-33–Cys-55, Cys-40–Cys-62, and Cys-44–Cys-64. A propeptide is located at residue Gly-83.

Contains 4 disulfide bonds. Expressed by the venom gland.

The protein localises to the secreted. Functionally, beta toxins bind voltage-independently at site-4 of sodium channels (Nav) and shift the voltage of activation toward more negative potentials thereby affecting sodium channel activation and promoting spontaneous and repetitive firing. This toxin is lethal to insects (A.domestica). It is not toxic to mice and does not affect mammal F11 sodium channels. The chain is Putative beta-neurotoxin RjAa12f from Rhopalurus junceus (Caribbean blue scorpion).